The following is a 1103-amino-acid chain: Bifunctional cytochrome P450/NADPH--P450 reductase (1103 aa).

The tract at residues 1 to 491 (MSTPKAEPVP…SSSEHADHAA (491 aa)) is cytochrome P450. Heme is bound at residue cysteine 415. Residues 492-1103 (GHGKAGAAKK…KERYTTDIFA (612 aa)) form an NADPH--P450 reductase region. One can recognise a Flavodoxin-like domain in the interval 508–649 (MHVYYGSNTG…DFDTWGETSF (142 aa)). Residues 514 to 519 (SNTGTC), 561 to 564 (SYEG), cysteine 596, and threonine 604 contribute to the FMN site. The region spanning 685–924 (LQLQEGLVVE…RPSHTGFKPP (240 aa)) is the FAD-binding FR-type domain.

In the N-terminal section; belongs to the cytochrome P450 family. Heme is required as a cofactor. FAD serves as cofactor. The cofactor is FMN.

The catalysed reaction is 2 oxidized [cytochrome P450] + NADPH = 2 reduced [cytochrome P450] + NADP(+) + H(+). It carries out the reaction an organic molecule + reduced [NADPH--hemoprotein reductase] + O2 = an alcohol + oxidized [NADPH--hemoprotein reductase] + H2O + H(+). Functionally, functions as a fatty acid monooxygenase. Also displays a NADPH-dependent reductase activity in the C-terminal domain, which allows electron transfer from NADPH to the heme iron of the cytochrome P450 N-terminal domain. The chain is Bifunctional cytochrome P450/NADPH--P450 reductase from Aspergillus oryzae (strain ATCC 42149 / RIB 40) (Yellow koji mold).